Consider the following 346-residue polypeptide: GTPase Obg (346 aa).

Residues 1 to 158 (MFIDKAKIYV…RWIELELKLL (158 aa)) form the Obg domain. An OBG-type G domain is found at 159-330 (ADVGIIGFPN…LINLIRETRD (172 aa)). GTP is bound by residues 165-172 (GFPNAGKS), 190-194 (FTTLT), 212-215 (DIPG), 282-285 (NKID), and 311-313 (SLI). 2 residues coordinate Mg(2+): Ser-172 and Thr-192.

It belongs to the TRAFAC class OBG-HflX-like GTPase superfamily. OBG GTPase family. Monomer. Mg(2+) serves as cofactor.

It localises to the cytoplasm. An essential GTPase which binds GTP, GDP and possibly (p)ppGpp with moderate affinity, with high nucleotide exchange rates and a fairly low GTP hydrolysis rate. Plays a role in control of the cell cycle, stress response, ribosome biogenesis and in those bacteria that undergo differentiation, in morphogenesis control. This is GTPase Obg from Sulfurihydrogenibium sp. (strain YO3AOP1).